The sequence spans 250 residues: Phosphoribosylaminoimidazole-succinocarboxamide synthase (250 aa).

The protein belongs to the SAICAR synthetase family.

It carries out the reaction 5-amino-1-(5-phospho-D-ribosyl)imidazole-4-carboxylate + L-aspartate + ATP = (2S)-2-[5-amino-1-(5-phospho-beta-D-ribosyl)imidazole-4-carboxamido]succinate + ADP + phosphate + 2 H(+). It functions in the pathway purine metabolism; IMP biosynthesis via de novo pathway; 5-amino-1-(5-phospho-D-ribosyl)imidazole-4-carboxamide from 5-amino-1-(5-phospho-D-ribosyl)imidazole-4-carboxylate: step 1/2. In Parasynechococcus marenigrum (strain WH8102), this protein is Phosphoribosylaminoimidazole-succinocarboxamide synthase.